A 352-amino-acid chain; its full sequence is Biotin synthase (352 aa).

In terms of domain architecture, Radical SAM core spans 44-262 (NRVQVSTLLS…LAVARLLMPK (219 aa)). Residues Cys-59, Cys-63, and Cys-66 each coordinate [4Fe-4S] cluster. Residues Cys-103, Cys-134, Cys-194, and Arg-266 each contribute to the [2Fe-2S] cluster site.

Belongs to the radical SAM superfamily. Biotin synthase family. In terms of assembly, homodimer. [4Fe-4S] cluster serves as cofactor. The cofactor is [2Fe-2S] cluster.

The enzyme catalyses (4R,5S)-dethiobiotin + (sulfur carrier)-SH + 2 reduced [2Fe-2S]-[ferredoxin] + 2 S-adenosyl-L-methionine = (sulfur carrier)-H + biotin + 2 5'-deoxyadenosine + 2 L-methionine + 2 oxidized [2Fe-2S]-[ferredoxin]. The protein operates within cofactor biosynthesis; biotin biosynthesis; biotin from 7,8-diaminononanoate: step 2/2. In terms of biological role, catalyzes the conversion of dethiobiotin (DTB) to biotin by the insertion of a sulfur atom into dethiobiotin via a radical-based mechanism. This is Biotin synthase from Pseudomonas putida (strain W619).